We begin with the raw amino-acid sequence, 529 residues long: Probable E3 ubiquitin-protein ligase MGRN1 (529 aa).

Residues 275 to 314 form an RING-type zinc finger; that stretch reads ECVVCLSDLRDTLILPCRHLCLCNACADTLRYQANNCPIC. Disordered stretches follow at residues 341 to 362 and 396 to 529; these read SPVLSQSSDHTEHSNADNIPPG and EMGD…VEEC. 2 stretches are compositionally biased toward polar residues: residues 449–463 and 477–487; these read AQPQSVLPCSLSPSE and NSGSESRSLGV. Over residues 501-511 the composition is skewed to low complexity; that stretch reads SSLSQSESDPS. Polar residues predominate over residues 520-529; the sequence is ESWSTAVEEC.

Post-translationally, autoubiquitinated in vitro.

It catalyses the reaction S-ubiquitinyl-[E2 ubiquitin-conjugating enzyme]-L-cysteine + [acceptor protein]-L-lysine = [E2 ubiquitin-conjugating enzyme]-L-cysteine + N(6)-ubiquitinyl-[acceptor protein]-L-lysine.. It functions in the pathway protein modification; protein ubiquitination. In terms of biological role, E3 ubiquitin-protein ligase. Also acts as a negative regulator of hedgehog signaling. The polypeptide is Probable E3 ubiquitin-protein ligase MGRN1 (mgrn1) (Danio rerio (Zebrafish)).